We begin with the raw amino-acid sequence, 469 residues long: Putative dipeptidase MW1694 (469 aa).

His84 is a binding site for Zn(2+). Residue Asp86 is part of the active site. Asp115 lines the Zn(2+) pocket. Glu149 acts as the Proton acceptor in catalysis. Glu150, Asp173, and His440 together coordinate Zn(2+).

Belongs to the peptidase M20A family. Requires Zn(2+) as cofactor.

The sequence is that of Putative dipeptidase MW1694 from Staphylococcus aureus (strain MW2).